The sequence spans 1828 residues: Dedicator of cytokinesis protein 2 (1828 aa).

The region spanning 8–69 (DKERHGVAIY…PTSFIHLKEV (62 aa)) is the SH3 domain. Position 304 is an N6-acetyllysine (lysine 304). One can recognise a C2 DOCK-type domain in the interval 423–607 (RNDIYITLLQ…DVFSISTLVC (185 aa)). 2 positions are modified to phosphoserine: serine 588 and serine 593. Residue lysine 738 is modified to N6-acetyllysine. One can recognise a DOCKER domain in the interval 1210–1621 (YKDNNREEMY…VEKEYGVREM (412 aa)). The interval 1652–1703 (SDCSTPSKVPAESFDLESAPPKTPKVEEEPISPGSTLPEVKLRRSKKRTKRS) is disordered. Serine 1683, serine 1704, serine 1729, and serine 1782 each carry phosphoserine.

Belongs to the DOCK family. As to quaternary structure, homodimer. Interacts with RAC1 and RAC2. Interacts with CRKL and VAV. Interacts with CD3Z. In terms of tissue distribution, specifically expressed in hematopoietic cells.

The protein resides in the endomembrane system. Its subcellular location is the cytoplasm. It is found in the cytoskeleton. Functionally, involved in cytoskeletal rearrangements required for lymphocyte migration in response of chemokines. Activates RAC1 and RAC2, but not CDC42, by functioning as a guanine nucleotide exchange factor (GEF), which exchanges bound GDP for free GTP. May also participate in IL2 transcriptional activation via the activation of RAC2. This is Dedicator of cytokinesis protein 2 (Dock2) from Mus musculus (Mouse).